We begin with the raw amino-acid sequence, 201 residues long: Peptidyl-tRNA hydrolase (201 aa).

Tyrosine 15 lines the tRNA pocket. Histidine 20 functions as the Proton acceptor in the catalytic mechanism. Tyrosine 66, asparagine 68, and asparagine 114 together coordinate tRNA.

The protein belongs to the PTH family. In terms of assembly, monomer.

It is found in the cytoplasm. It carries out the reaction an N-acyl-L-alpha-aminoacyl-tRNA + H2O = an N-acyl-L-amino acid + a tRNA + H(+). Its function is as follows. Hydrolyzes ribosome-free peptidyl-tRNAs (with 1 or more amino acids incorporated), which drop off the ribosome during protein synthesis, or as a result of ribosome stalling. Functionally, catalyzes the release of premature peptidyl moieties from peptidyl-tRNA molecules trapped in stalled 50S ribosomal subunits, and thus maintains levels of free tRNAs and 50S ribosomes. The polypeptide is Peptidyl-tRNA hydrolase (Burkholderia mallei (strain NCTC 10247)).